The primary structure comprises 344 residues: Ribosomal RNA large subunit methyltransferase Cfr (344 aa).

The Proton acceptor role is filled by Glu-88. Residues 95-324 enclose the Radical SAM core domain; it reads KKGWESFCIS…HANGISVATR (230 aa). Cys-102 and Cys-335 form a disulfide bridge. [4Fe-4S] cluster contacts are provided by Cys-109, Cys-113, and Cys-116. Residues 155–156, Ser-186, 209–211, and Asn-290 each bind S-adenosyl-L-methionine; these read GE and SLH. Residue Cys-335 is the S-methylcysteine intermediate of the active site.

This sequence belongs to the radical SAM superfamily. RlmN family. Cfr subfamily. Requires [4Fe-4S] cluster as cofactor.

The protein resides in the cytoplasm. It carries out the reaction adenosine(2503) in 23S rRNA + 2 reduced [2Fe-2S]-[ferredoxin] + 2 S-adenosyl-L-methionine = 8-methyladenosine(2503) in 23S rRNA + 5'-deoxyadenosine + L-methionine + 2 oxidized [2Fe-2S]-[ferredoxin] + S-adenosyl-L-homocysteine. In terms of biological role, specifically methylates position 8 of adenine 2503 in 23S rRNA. Confers resistance to some classes of antibiotics. In Lachnoclostridium phytofermentans (strain ATCC 700394 / DSM 18823 / ISDg) (Clostridium phytofermentans), this protein is Ribosomal RNA large subunit methyltransferase Cfr.